Consider the following 484-residue polypeptide: Glycogen synthase (484 aa).

Lysine 15 contributes to the ADP-alpha-D-glucose binding site.

Belongs to the glycosyltransferase 1 family. Bacterial/plant glycogen synthase subfamily.

The catalysed reaction is [(1-&gt;4)-alpha-D-glucosyl](n) + ADP-alpha-D-glucose = [(1-&gt;4)-alpha-D-glucosyl](n+1) + ADP + H(+). The protein operates within glycan biosynthesis; glycogen biosynthesis. Its function is as follows. Synthesizes alpha-1,4-glucan chains using ADP-glucose. The chain is Glycogen synthase from Geotalea daltonii (strain DSM 22248 / JCM 15807 / FRC-32) (Geobacter daltonii).